The following is a 156-amino-acid chain: ATP synthase subunit b (156 aa).

The chain crosses the membrane as a helical span at residues 11 to 31 (AIAFILFVWFCMKYVWPPLMA).

The protein belongs to the ATPase B chain family. F-type ATPases have 2 components, F(1) - the catalytic core - and F(0) - the membrane proton channel. F(1) has five subunits: alpha(3), beta(3), gamma(1), delta(1), epsilon(1). F(0) has three main subunits: a(1), b(2) and c(10-14). The alpha and beta chains form an alternating ring which encloses part of the gamma chain. F(1) is attached to F(0) by a central stalk formed by the gamma and epsilon chains, while a peripheral stalk is formed by the delta and b chains.

The protein localises to the cell inner membrane. Functionally, f(1)F(0) ATP synthase produces ATP from ADP in the presence of a proton or sodium gradient. F-type ATPases consist of two structural domains, F(1) containing the extramembraneous catalytic core and F(0) containing the membrane proton channel, linked together by a central stalk and a peripheral stalk. During catalysis, ATP synthesis in the catalytic domain of F(1) is coupled via a rotary mechanism of the central stalk subunits to proton translocation. Component of the F(0) channel, it forms part of the peripheral stalk, linking F(1) to F(0). In Salmonella gallinarum (strain 287/91 / NCTC 13346), this protein is ATP synthase subunit b.